A 268-amino-acid polypeptide reads, in one-letter code: Hydroxyethylthiazole kinase (268 aa).

Methionine 45 serves as a coordination point for substrate. Residues arginine 121 and threonine 167 each coordinate ATP. Glycine 194 is a binding site for substrate.

The protein belongs to the Thz kinase family. The cofactor is Mg(2+).

It carries out the reaction 5-(2-hydroxyethyl)-4-methylthiazole + ATP = 4-methyl-5-(2-phosphooxyethyl)-thiazole + ADP + H(+). Its pathway is cofactor biosynthesis; thiamine diphosphate biosynthesis; 4-methyl-5-(2-phosphoethyl)-thiazole from 5-(2-hydroxyethyl)-4-methylthiazole: step 1/1. Catalyzes the phosphorylation of the hydroxyl group of 4-methyl-5-beta-hydroxyethylthiazole (THZ). The sequence is that of Hydroxyethylthiazole kinase from Bacillus cereus (strain ATCC 10987 / NRS 248).